Here is a 289-residue protein sequence, read N- to C-terminus: uncharacterized protein (289 aa).

A run of 10 helical transmembrane segments spans residues 7-27, 33-53, 65-85, 92-112, 123-143, 148-168, 182-202, 212-232, 241-261, and 265-285; these read LLLALTMLIWAGSFIFIKIGL, FNLAFYRFLLASPLLMAWVFW, WLHLSVLALSGVTLLYAFQFL, ATNASILINTSAVFVALWGLV, GVFLSFAGVVLIVSKGTLEFF, IFGDVLMIVDGFLWAVYTVLG, AYAFALGTIFLIPFALMSGFA, VAALLYLSILCSVFAYVVWYY, SVAVYVYLVPLFTAIFAFYAL, and PDFFTAIGGIITIAGVYLTTA. EamA domains lie at 14–136 and 159–285; these read LIWA…LIVS and FLWA…LTTA.

The protein belongs to the EamA transporter family.

It localises to the cell membrane. This is an uncharacterized protein from Archaeoglobus fulgidus (strain ATCC 49558 / DSM 4304 / JCM 9628 / NBRC 100126 / VC-16).